Here is a 49-residue protein sequence, read N- to C-terminus: Small ribosomal subunit protein uS14B (49 aa).

Belongs to the universal ribosomal protein uS14 family. Zinc-binding uS14 subfamily. As to quaternary structure, part of the 30S ribosomal subunit.

In terms of biological role, binds 16S rRNA, required for the assembly of 30S particles. In Natronomonas pharaonis (strain ATCC 35678 / DSM 2160 / CIP 103997 / JCM 8858 / NBRC 14720 / NCIMB 2260 / Gabara) (Halobacterium pharaonis), this protein is Small ribosomal subunit protein uS14B.